The primary structure comprises 335 residues: Histidinol-phosphatase (335 aa).

The protein belongs to the PHP hydrolase family. HisK subfamily.

It carries out the reaction L-histidinol phosphate + H2O = L-histidinol + phosphate. The protein operates within amino-acid biosynthesis; L-histidine biosynthesis; L-histidine from 5-phospho-alpha-D-ribose 1-diphosphate: step 8/9. This is Histidinol-phosphatase (HIS2) from Saccharomyces cerevisiae (strain ATCC 204508 / S288c) (Baker's yeast).